The primary structure comprises 196 residues: UMP-CMP kinase (196 aa).

13-18 (GAGKGT) provides a ligand contact to ATP. A Phosphoserine modification is found at serine 33. Residues 33-63 (SAGELLRDERKNPDSQYGELIEKYIKEGKIV) form an NMP region. Arginine 39 is a binding site for a ribonucleoside 5'-phosphate. N6-acetyllysine occurs at positions 43 and 55. Residue 61–63 (KIV) coordinates a ribonucleoside 5'-phosphate. Lysine 73 is covalently cross-linked (Glycyl lysine isopeptide (Lys-Gly) (interchain with G-Cter in SUMO2)). Position 93 to 96 (93 to 96 (GFPR)) interacts with a ribonucleoside 5'-phosphate. Residue asparagine 100 participates in CMP binding. Position 106 is an N6-succinyllysine (lysine 106). The tract at residues 133–143 (ERGKSSGRSDD) is LID. Arginine 134 serves as a coordination point for ATP. A ribonucleoside 5'-phosphate is bound by residues arginine 140 and arginine 151. Position 179 (lysine 179) interacts with ATP. The residue at position 180 (serine 180) is a Phosphoserine.

This sequence belongs to the adenylate kinase family. UMP-CMP kinase subfamily. In terms of assembly, monomer. The cofactor is Mg(2+).

The protein resides in the nucleus. It is found in the cytoplasm. The catalysed reaction is CMP + ATP = CDP + ADP. It carries out the reaction dCMP + ATP = dCDP + ADP. It catalyses the reaction UMP + ATP = UDP + ADP. The enzyme catalyses a 2'-deoxyribonucleoside 5'-diphosphate + ATP = a 2'-deoxyribonucleoside 5'-triphosphate + ADP. The catalysed reaction is a ribonucleoside 5'-diphosphate + ATP = a ribonucleoside 5'-triphosphate + ADP. Functionally, catalyzes the phosphorylation of pyrimidine nucleoside monophosphates at the expense of ATP. Plays an important role in de novo pyrimidine nucleotide biosynthesis. Has preference for UMP and CMP as phosphate acceptors. Also displays broad nucleoside diphosphate kinase activity. In Mus musculus (Mouse), this protein is UMP-CMP kinase (Cmpk1).